We begin with the raw amino-acid sequence, 197 residues long: Recombination protein RecR (197 aa).

A C4-type zinc finger spans residues 57–72 (CSVCFALTEQNPCPIC). Positions 79 to 174 (SVICVVETSQ…RVTRLAHGIP (96 aa)) constitute a Toprim domain.

Belongs to the RecR family.

Its function is as follows. May play a role in DNA repair. It seems to be involved in an RecBC-independent recombinational process of DNA repair. It may act with RecF and RecO. This is Recombination protein RecR from Trichlorobacter lovleyi (strain ATCC BAA-1151 / DSM 17278 / SZ) (Geobacter lovleyi).